Consider the following 324-residue polypeptide: N-acetyl-gamma-glutamyl-phosphate reductase (324 aa).

Residue C131 is part of the active site.

It belongs to the NAGSA dehydrogenase family. Type 1 subfamily.

It localises to the cytoplasm. The catalysed reaction is N-acetyl-L-glutamate 5-semialdehyde + phosphate + NADP(+) = N-acetyl-L-glutamyl 5-phosphate + NADPH + H(+). The protein operates within amino-acid biosynthesis; L-arginine biosynthesis; N(2)-acetyl-L-ornithine from L-glutamate: step 3/4. In terms of biological role, catalyzes the NADPH-dependent reduction of N-acetyl-5-glutamyl phosphate to yield N-acetyl-L-glutamate 5-semialdehyde. The polypeptide is N-acetyl-gamma-glutamyl-phosphate reductase (Bradyrhizobium sp. (strain ORS 278)).